Here is a 184-residue protein sequence, read N- to C-terminus: Large ribosomal subunit protein eL18 (184 aa).

This sequence belongs to the eukaryotic ribosomal protein eL18 family.

Its subcellular location is the cytoplasm. The chain is Large ribosomal subunit protein eL18 (RPL18) from Theileria parva (East coast fever infection agent).